We begin with the raw amino-acid sequence, 355 residues long: Holliday junction branch migration complex subunit RuvB (355 aa).

The interval 4-190 (TDKLAAERII…FGIVARLEFY (187 aa)) is large ATPase domain (RuvB-L). ATP is bound by residues leucine 29, arginine 30, glycine 71, lysine 74, threonine 75, threonine 76, 137-139 (EDY), arginine 180, tyrosine 190, and arginine 227. Threonine 75 contacts Mg(2+). The small ATPAse domain (RuvB-S) stretch occupies residues 191 to 261 (DADQLSRIVQ…IADAALAMLD (71 aa)). Residues 264–355 (PVGFDLMDRK…QSIWDTPDAQ (92 aa)) form a head domain (RuvB-H) region. Positions 300, 319, and 324 each coordinate DNA.

It belongs to the RuvB family. Homohexamer. Forms an RuvA(8)-RuvB(12)-Holliday junction (HJ) complex. HJ DNA is sandwiched between 2 RuvA tetramers; dsDNA enters through RuvA and exits via RuvB. An RuvB hexamer assembles on each DNA strand where it exits the tetramer. Each RuvB hexamer is contacted by two RuvA subunits (via domain III) on 2 adjacent RuvB subunits; this complex drives branch migration. In the full resolvosome a probable DNA-RuvA(4)-RuvB(12)-RuvC(2) complex forms which resolves the HJ.

It localises to the cytoplasm. The catalysed reaction is ATP + H2O = ADP + phosphate + H(+). Its function is as follows. The RuvA-RuvB-RuvC complex processes Holliday junction (HJ) DNA during genetic recombination and DNA repair, while the RuvA-RuvB complex plays an important role in the rescue of blocked DNA replication forks via replication fork reversal (RFR). RuvA specifically binds to HJ cruciform DNA, conferring on it an open structure. The RuvB hexamer acts as an ATP-dependent pump, pulling dsDNA into and through the RuvAB complex. RuvB forms 2 homohexamers on either side of HJ DNA bound by 1 or 2 RuvA tetramers; 4 subunits per hexamer contact DNA at a time. Coordinated motions by a converter formed by DNA-disengaged RuvB subunits stimulates ATP hydrolysis and nucleotide exchange. Immobilization of the converter enables RuvB to convert the ATP-contained energy into a lever motion, pulling 2 nucleotides of DNA out of the RuvA tetramer per ATP hydrolyzed, thus driving DNA branch migration. The RuvB motors rotate together with the DNA substrate, which together with the progressing nucleotide cycle form the mechanistic basis for DNA recombination by continuous HJ branch migration. Branch migration allows RuvC to scan DNA until it finds its consensus sequence, where it cleaves and resolves cruciform DNA. The chain is Holliday junction branch migration complex subunit RuvB from Burkholderia multivorans (strain ATCC 17616 / 249).